A 239-amino-acid polypeptide reads, in one-letter code: MGNKIHPIGFRLGITRDWESRWYAGKKQYRHLLLEDQRIRGLLEKELYSAGLARVDIERAADNVAVTVHVAKPGVVIGRGGERIRVLREELAKLTGKNVALNVQEVQNPNLSAPLVAQRVAEQIERRFAVRRAIKQAVQRVMESGAKGAKVIVSGRIGGAEQARTEWAAQGRVPLHTLRANIDYGFALARTTYGVLGVKAYIFLGEVIGGQKPKARPELPKAEERPRRRRPAVRVKKEE.

In terms of domain architecture, KH type-2 spans 40 to 108 (RGLLEKELYS…VALNVQEVQN (69 aa)). The interval 212–239 (KPKARPELPKAEERPRRRRPAVRVKKEE) is disordered. The span at 215 to 226 (ARPELPKAEERP) shows a compositional bias: basic and acidic residues. Residues 227-239 (RRRRPAVRVKKEE) are compositionally biased toward basic residues.

This sequence belongs to the universal ribosomal protein uS3 family. Part of the 30S ribosomal subunit. Forms a tight complex with proteins S10 and S14.

Functionally, binds the lower part of the 30S subunit head. Binds mRNA in the 70S ribosome, positioning it for translation. The chain is Small ribosomal subunit protein uS3 (rpsC) from Thermus thermophilus (strain ATCC BAA-163 / DSM 7039 / HB27).